The chain runs to 314 residues: Dual specificity protein phosphatase 2 (314 aa).

The Rhodanese domain occupies 23–144; it reads EAERTLLLDC…FQGCCPDLCS (122 aa). One can recognise a Tyrosine-protein phosphatase domain in the interval 172-313; sequence GPVEILPYLF…LLQFETQVLC (142 aa). Cys-257 (phosphocysteine intermediate) is an active-site residue.

It belongs to the protein-tyrosine phosphatase family. Non-receptor class dual specificity subfamily. As to quaternary structure, interacts with MAPK14; this interaction does not lead to catalytic activation of DUSP2 and dephosphrylation of MAPK14. Expressed in hematopoietic tissues.

It localises to the nucleus. The enzyme catalyses O-phospho-L-tyrosyl-[protein] + H2O = L-tyrosyl-[protein] + phosphate. The catalysed reaction is O-phospho-L-threonyl-[protein] + H2O = L-threonyl-[protein] + phosphate. Functionally, dephosphorylates both phosphorylated Thr and Tyr residues in MAPK1, and dephosphorylation of phosphotyrosine is slightly faster than that of phosphothreonine. Can dephosphorylate MAPK1. The protein is Dual specificity protein phosphatase 2 of Homo sapiens (Human).